The sequence spans 276 residues: MDSSREPTLGRLDAAGFWQVWQRFDADEKGYIEEKELDAFFLHMLMKLGTDDTVMKANLHKVKQQFMTTQDASKDGRIRMKELAGMFLSEDENFLLLFRRENPLDSSVEFMQIWRKYDADSSGFISAAELRNFLRDLFLHHKKAISEAKLEEYTGTMMKIFDRNKDGRLDLNDLARILALQENFLLQFKMDACSTEERKRDFEKIFAYYDVSKTGALEGPEVDGFVKDMMELVQPSISGVDLDKFREILLRHCDVNKDGKIQKSELALCLGLKINP.

EF-hand domains follow at residues 12–47, 58–93, 105–140, 149–184, 197–232, and 240–276; these read LDAA…MLMK, NLHK…EDEN, DSSV…LFLH, KLEE…QENF, ERKR…MMEL, and VDLD…KINP. Ca(2+)-binding residues include aspartate 25, aspartate 27, tyrosine 31, glutamate 36, aspartate 71, serine 73, aspartate 75, arginine 77, glutamate 82, aspartate 118, aspartate 120, serine 122, glutamate 129, aspartate 162, asparagine 164, aspartate 166, arginine 168, aspartate 173, aspartate 210, serine 212, threonine 214, glutamate 221, aspartate 254, asparagine 256, aspartate 258, lysine 260, and glutamate 265.

In terms of tissue distribution, expressed at high levels in the pancreatic islets of Langerhans and to a much lesser extent in the gastrointestinal tract (stomach, small intestine and colon), the adrenal medulla and cortex and the thyroid C-cells. In the brain, the expression is restricted to distinct subtypes of neurons with highest expression in the molecular layer of the cerebellum (stellate and basket cells), in the anterior part of the pituitary gland, in the thalamus, in the hypothalamus and in a subgroup of neocortical neurons.

The protein localises to the cytoplasm. It is found in the secreted. Its subcellular location is the cytoplasmic vesicle. It localises to the secretory vesicle membrane. The polypeptide is Secretagogin (SCGN) (Homo sapiens (Human)).